Here is a 258-residue protein sequence, read N- to C-terminus: Phosphate import ATP-binding protein PstB 3 (258 aa).

Positions 10–253 (MTARSLAVHY…PANSLTQGYI (244 aa)) constitute an ABC transporter domain. 42-49 (GPSGCGKS) is a binding site for ATP.

This sequence belongs to the ABC transporter superfamily. Phosphate importer (TC 3.A.1.7) family. The complex is composed of two ATP-binding proteins (PstB), two transmembrane proteins (PstC and PstA) and a solute-binding protein (PstS).

It localises to the cell inner membrane. The catalysed reaction is phosphate(out) + ATP + H2O = ADP + 2 phosphate(in) + H(+). In terms of biological role, part of the ABC transporter complex PstSACB involved in phosphate import. Responsible for energy coupling to the transport system. This is Phosphate import ATP-binding protein PstB 3 from Paramagnetospirillum magneticum (strain ATCC 700264 / AMB-1) (Magnetospirillum magneticum).